The chain runs to 227 residues: Cytochrome c oxidase subunit 2 (227 aa).

Over 1–14 (MAYPFQLGLQDASS) the chain is Mitochondrial intermembrane. Residues 15–45 (PIMEELTNFHDHTLMIVFLISSLVLYIISSM) form a helical membrane-spanning segment. At 46–59 (LTTKMTHTSTMDAQ) the chain is on the mitochondrial matrix side. The helical transmembrane segment at 60 to 87 (EVETIWTVLPAVILILIALPSLRILYMM) threads the bilayer. Topologically, residues 88–227 (DEINNPVLTV…HFENWSTSMI (140 aa)) are mitochondrial intermembrane. The Cu cation site is built by H161, C196, E198, C200, H204, and M207. Mg(2+) is bound at residue E198.

This sequence belongs to the cytochrome c oxidase subunit 2 family. Component of the cytochrome c oxidase (complex IV, CIV), a multisubunit enzyme composed of 14 subunits. The complex is composed of a catalytic core of 3 subunits MT-CO1, MT-CO2 and MT-CO3, encoded in the mitochondrial DNA, and 11 supernumerary subunits COX4I, COX5A, COX5B, COX6A, COX6B, COX6C, COX7A, COX7B, COX7C, COX8 and NDUFA4, which are encoded in the nuclear genome. The complex exists as a monomer or a dimer and forms supercomplexes (SCs) in the inner mitochondrial membrane with NADH-ubiquinone oxidoreductase (complex I, CI) and ubiquinol-cytochrome c oxidoreductase (cytochrome b-c1 complex, complex III, CIII), resulting in different assemblies (supercomplex SCI(1)III(2)IV(1) and megacomplex MCI(2)III(2)IV(2)). Found in a complex with TMEM177, COA6, COX18, COX20, SCO1 and SCO2. Interacts with TMEM177 in a COX20-dependent manner. Interacts with COX20. Interacts with COX16. Requires Cu cation as cofactor.

It is found in the mitochondrion inner membrane. The enzyme catalyses 4 Fe(II)-[cytochrome c] + O2 + 8 H(+)(in) = 4 Fe(III)-[cytochrome c] + 2 H2O + 4 H(+)(out). Functionally, component of the cytochrome c oxidase, the last enzyme in the mitochondrial electron transport chain which drives oxidative phosphorylation. The respiratory chain contains 3 multisubunit complexes succinate dehydrogenase (complex II, CII), ubiquinol-cytochrome c oxidoreductase (cytochrome b-c1 complex, complex III, CIII) and cytochrome c oxidase (complex IV, CIV), that cooperate to transfer electrons derived from NADH and succinate to molecular oxygen, creating an electrochemical gradient over the inner membrane that drives transmembrane transport and the ATP synthase. Cytochrome c oxidase is the component of the respiratory chain that catalyzes the reduction of oxygen to water. Electrons originating from reduced cytochrome c in the intermembrane space (IMS) are transferred via the dinuclear copper A center (CU(A)) of subunit 2 and heme A of subunit 1 to the active site in subunit 1, a binuclear center (BNC) formed by heme A3 and copper B (CU(B)). The BNC reduces molecular oxygen to 2 water molecules using 4 electrons from cytochrome c in the IMS and 4 protons from the mitochondrial matrix. This chain is Cytochrome c oxidase subunit 2 (MT-CO2), found in Lophuromys flavopunctatus (Yellow-spotted brush-furred rat).